An 848-amino-acid chain; its full sequence is Trimethylamine-N-oxide reductase 1 (848 aa).

Residues 1–39 constitute a signal peptide (tat-type signal); the sequence is MNNNDLFQASRRRFLAQLGGLTVAGMLGPSLLTSRRATA. Serine 191 contacts Mo-bis(molybdopterin guanine dinucleotide).

It belongs to the prokaryotic molybdopterin-containing oxidoreductase family. Interacts with the N-terminal domain of TorC. The cofactor is Mo-bis(molybdopterin guanine dinucleotide). In terms of processing, predicted to be exported by the Tat system. The position of the signal peptide cleavage has not been experimentally proven.

The protein localises to the periplasm. The catalysed reaction is trimethylamine + 2 Fe(III)-[cytochrome c] + H2O = trimethylamine N-oxide + 2 Fe(II)-[cytochrome c] + 3 H(+). Its function is as follows. Reduces trimethylamine-N-oxide (TMAO) into trimethylamine; an anaerobic reaction coupled to energy-yielding reactions. This is Trimethylamine-N-oxide reductase 1 (torA) from Escherichia coli O157:H7.